The primary structure comprises 57 residues: DNA-directed RNA polymerase subunit Rpo6 (57 aa).

This sequence belongs to the archaeal Rpo6/eukaryotic RPB6 RNA polymerase subunit family. As to quaternary structure, part of the RNA polymerase complex.

The protein resides in the cytoplasm. It carries out the reaction RNA(n) + a ribonucleoside 5'-triphosphate = RNA(n+1) + diphosphate. In terms of biological role, DNA-dependent RNA polymerase (RNAP) catalyzes the transcription of DNA into RNA using the four ribonucleoside triphosphates as substrates. This is DNA-directed RNA polymerase subunit Rpo6 from Haloarcula marismortui (strain ATCC 43049 / DSM 3752 / JCM 8966 / VKM B-1809) (Halobacterium marismortui).